A 501-amino-acid chain; its full sequence is Zinc-binding lipoprotein AdcA (501 aa).

Residues 1–18 (MKKISLLLASLCALFLVA) form the signal peptide. Cysteine 19 carries N-palmitoyl cysteine lipidation. Cysteine 19 carries S-diacylglycerol cysteine lipidation. Histidine 63 lines the Zn(2+) pocket. Positions 116–136 (LPGGEEEEGDHDHGEEGHHHE) are disordered. A his-rich loop region spans residues 120-136 (EEEEGDHDHGEEGHHHE). Positions 125–136 (DHDHGEEGHHHE) are enriched in basic and acidic residues. The Zn(2+) site is built by histidine 140, histidine 204, and glutamate 279.

It belongs to the bacterial solute-binding protein 9 family.

Its subcellular location is the cell membrane. Part of the ATP-binding cassette (ABC) transport system AdcABC involved in zinc import. Binds zinc with high affinity and specificity and delivers it to the membrane permease for translocation into the cytoplasm. Required for transformability. This Streptococcus pneumoniae (strain ATCC BAA-255 / R6) protein is Zinc-binding lipoprotein AdcA (adcA).